A 349-amino-acid chain; its full sequence is 1-acylglycerol-3-phosphate O-acyltransferase ABHD5 (349 aa).

An N-acetylalanine modification is found at Ala-2. An AB hydrolase-1 domain is found at 77–184 (PLVLLHGFGG…LVEPWGFPER (108 aa)). Ser-122 carries the post-translational modification Phosphoserine. Residues 327-332 (HYVYAD) carry the HXXXXD motif motif.

It belongs to the peptidase S33 family. ABHD4/ABHD5 subfamily. As to quaternary structure, interacts with ADRP, PLIN and PNPLA2. Interacts with PLIN5; promotes interaction with PNPLA2. As to expression, widely expressed in various tissues, including lymphocytes, liver, skeletal muscle and brain. Expressed by upper epidermal layers and dermal fibroblasts in skin, hepatocytes and neurons (at protein level).

The protein resides in the cytoplasm. It is found in the lipid droplet. Its subcellular location is the cytosol. The catalysed reaction is a 1-acyl-sn-glycero-3-phosphate + an acyl-CoA = a 1,2-diacyl-sn-glycero-3-phosphate + CoA. The enzyme catalyses 1-(9Z-octadecenoyl)-sn-glycero-3-phosphate + hexadecanoyl-CoA = 1-(9Z)-octadecenoyl-2-hexadecanoyl-sn-glycero-3-phosphate + CoA. It carries out the reaction 1-(9Z-octadecenoyl)-sn-glycero-3-phosphate + octadecanoyl-CoA = 1-(9Z-octadecenoyl)-2-octadecanoyl-sn-glycero-3-phosphate + CoA. It catalyses the reaction 1-(9Z-octadecenoyl)-sn-glycero-3-phosphate + (9Z)-octadecenoyl-CoA = 1,2-di-(9Z-octadecenoyl)-sn-glycero-3-phosphate + CoA. The catalysed reaction is 1-(9Z-octadecenoyl)-sn-glycero-3-phosphate + (5Z,8Z,11Z,14Z)-eicosatetraenoyl-CoA = 1-(9Z)-octadecenoyl-2-(5Z,8Z,11Z,14Z)-eicosatetraenoyl-sn-glycero-3-phosphate + CoA. The enzyme catalyses eicosanoyl-CoA + 1-(9Z-octadecenoyl)-sn-glycero-3-phosphate = 1-(9Z)-octadecenoyl-2-eicosanoyl-sn-glycero-3-phosphate + CoA. It carries out the reaction 1-hexadecanoyl-sn-glycero-3-phosphate + (9Z)-octadecenoyl-CoA = 1-hexadecanoyl-2-(9Z-octadecenoyl)-sn-glycero-3-phosphate + CoA. It catalyses the reaction 1-octadecanoyl-sn-glycero-3-phosphate + (9Z)-octadecenoyl-CoA = 1-octadecanoyl-2-(9Z-octadecenoyl)-sn-glycero-3-phosphate + CoA. The catalysed reaction is 1-(5Z,8Z,11Z,14Z-eicosatetraenoyl)-sn-glycero-3-phosphate + (9Z)-octadecenoyl-CoA = 1-(5Z,8Z,11Z,14Z)-eicosatetraenoyl-2-(9Z)-octadecenoyl-sn-glycero-3-phosphate + CoA. With respect to regulation, acyltransferase activity is inhibited by detergents such as Triton X-100 and 3-[(3-cholamidopropyl)dimethylammonio]-1-propanesulfonate (CHAPS). Acyltransferase activity is inhibited by the presence of magnesium and calcium. In terms of biological role, coenzyme A-dependent lysophosphatidic acid acyltransferase that catalyzes the transfer of an acyl group on a lysophosphatidic acid. Functions preferentially with 1-oleoyl-lysophosphatidic acid followed by 1-palmitoyl-lysophosphatidic acid, 1-stearoyl-lysophosphatidic acid and 1-arachidonoyl-lysophosphatidic acid as lipid acceptor. Functions preferentially with arachidonoyl-CoA followed by oleoyl-CoA as acyl group donors. Functions in phosphatidic acid biosynthesis. May regulate the cellular storage of triacylglycerol through activation of the phospholipase PNPLA2. Involved in keratinocyte differentiation. Regulates lipid droplet fusion. In Homo sapiens (Human), this protein is 1-acylglycerol-3-phosphate O-acyltransferase ABHD5.